Consider the following 236-residue polypeptide: 2,3,4,5-tetrahydropyridine-2,6-dicarboxylate N-acetyltransferase (236 aa).

This sequence belongs to the transferase hexapeptide repeat family. DapH subfamily.

The catalysed reaction is (S)-2,3,4,5-tetrahydrodipicolinate + acetyl-CoA + H2O = L-2-acetamido-6-oxoheptanedioate + CoA. It participates in amino-acid biosynthesis; L-lysine biosynthesis via DAP pathway; LL-2,6-diaminopimelate from (S)-tetrahydrodipicolinate (acetylase route): step 1/3. Catalyzes the transfer of an acetyl group from acetyl-CoA to tetrahydrodipicolinate. In Clostridium botulinum (strain 657 / Type Ba4), this protein is 2,3,4,5-tetrahydropyridine-2,6-dicarboxylate N-acetyltransferase.